The chain runs to 291 residues: Putative carboxymethylenebutenolidase (291 aa).

Positions 1–40 are cleaved as a signal peptide; sequence MTAFDADLRSLAAQTTLSRRTVIATSLATGFALAVQPVAA. Active-site residues include Cys-170, Asp-227, and His-259.

The protein belongs to the dienelactone hydrolase family.

The enzyme catalyses 2-(5-oxo-2,5-dihydrofuran-2-ylidene)acetate + H2O = 4-oxohex-2-enedioate + H(+). This is Putative carboxymethylenebutenolidase from Methylorubrum extorquens (strain ATCC 14718 / DSM 1338 / JCM 2805 / NCIMB 9133 / AM1) (Methylobacterium extorquens).